The sequence spans 350 residues: Phenylalanine--tRNA ligase alpha subunit (350 aa).

E259 serves as a coordination point for Mg(2+).

The protein belongs to the class-II aminoacyl-tRNA synthetase family. Phe-tRNA synthetase alpha subunit type 1 subfamily. As to quaternary structure, tetramer of two alpha and two beta subunits. Mg(2+) is required as a cofactor.

The protein localises to the cytoplasm. It carries out the reaction tRNA(Phe) + L-phenylalanine + ATP = L-phenylalanyl-tRNA(Phe) + AMP + diphosphate + H(+). The polypeptide is Phenylalanine--tRNA ligase alpha subunit (pheS) (Rickettsia prowazekii (strain Madrid E)).